Consider the following 88-residue polypeptide: Putative sulfur carrier protein AF_0552 (88 aa).

Belongs to the sulfur carrier protein CysO family.

This Archaeoglobus fulgidus (strain ATCC 49558 / DSM 4304 / JCM 9628 / NBRC 100126 / VC-16) protein is Putative sulfur carrier protein AF_0552.